Here is a 123-residue protein sequence, read N- to C-terminus: Small ribosomal subunit protein uS13 (123 aa).

A disordered region spans residues 97–123 (PVRGQKTKTNARTRKGPKKTVGRKKKK). Positions 101–123 (QKTKTNARTRKGPKKTVGRKKKK) are enriched in basic residues.

Belongs to the universal ribosomal protein uS13 family. Part of the 30S ribosomal subunit. Forms a loose heterodimer with protein S19. Forms two bridges to the 50S subunit in the 70S ribosome.

Its function is as follows. Located at the top of the head of the 30S subunit, it contacts several helices of the 16S rRNA. In the 70S ribosome it contacts the 23S rRNA (bridge B1a) and protein L5 of the 50S subunit (bridge B1b), connecting the 2 subunits; these bridges are implicated in subunit movement. Contacts the tRNAs in the A and P-sites. In Alkaliphilus oremlandii (strain OhILAs) (Clostridium oremlandii (strain OhILAs)), this protein is Small ribosomal subunit protein uS13.